The following is a 378-amino-acid chain: Glutamate 5-kinase (378 aa).

ATP is bound at residue K19. The substrate site is built by S59, D146, and N158. Position 178–179 (178–179) interacts with ATP; it reads TD. Residues 285–363 form the PUA domain; that stretch reads RGSVTVDPGA…SEFEKLLGYT (79 aa).

Belongs to the glutamate 5-kinase family.

It is found in the cytoplasm. It catalyses the reaction L-glutamate + ATP = L-glutamyl 5-phosphate + ADP. Its pathway is amino-acid biosynthesis; L-proline biosynthesis; L-glutamate 5-semialdehyde from L-glutamate: step 1/2. Catalyzes the transfer of a phosphate group to glutamate to form L-glutamate 5-phosphate. This chain is Glutamate 5-kinase, found in Polaromonas naphthalenivorans (strain CJ2).